The primary structure comprises 192 residues: GTP-dependent dephospho-CoA kinase (192 aa).

GTP-binding residues include aspartate 49, valine 50, valine 51, aspartate 68, lysine 70, and glutamate 127.

Belongs to the GTP-dependent DPCK family.

It carries out the reaction 3'-dephospho-CoA + GTP = GDP + CoA + H(+). It functions in the pathway cofactor biosynthesis; coenzyme A biosynthesis. Functionally, catalyzes the GTP-dependent phosphorylation of the 3'-hydroxyl group of dephosphocoenzyme A to form coenzyme A (CoA). In Halorubrum lacusprofundi (strain ATCC 49239 / DSM 5036 / JCM 8891 / ACAM 34), this protein is GTP-dependent dephospho-CoA kinase.